A 380-amino-acid polypeptide reads, in one-letter code: tRNA (guanine(26)-N(2))-dimethyltransferase (380 aa).

The 373-residue stretch at 2–374 (ITVNEGSVTI…AGIGEIEEVL (373 aa)) folds into the Trm1 methyltransferase domain. Positions 35, 65, 83, 109, and 110 each coordinate S-adenosyl-L-methionine. Positions 242, 245, 261, and 264 each coordinate Zn(2+).

The protein belongs to the class I-like SAM-binding methyltransferase superfamily. Trm1 family.

The enzyme catalyses guanosine(26) in tRNA + 2 S-adenosyl-L-methionine = N(2)-dimethylguanosine(26) in tRNA + 2 S-adenosyl-L-homocysteine + 2 H(+). In terms of biological role, dimethylates a single guanine residue at position 26 of a number of tRNAs using S-adenosyl-L-methionine as donor of the methyl groups. In Methanothermobacter thermautotrophicus (strain ATCC 29096 / DSM 1053 / JCM 10044 / NBRC 100330 / Delta H) (Methanobacterium thermoautotrophicum), this protein is tRNA (guanine(26)-N(2))-dimethyltransferase.